The sequence spans 215 residues: Pyrrolidone-carboxylate peptidase (215 aa).

Residues glutamate 80, cysteine 143, and histidine 167 contribute to the active site.

Belongs to the peptidase C15 family. In terms of assembly, homotetramer.

Its subcellular location is the cytoplasm. The enzyme catalyses Release of an N-terminal pyroglutamyl group from a polypeptide, the second amino acid generally not being Pro.. In terms of biological role, removes 5-oxoproline from various penultimate amino acid residues except L-proline. The sequence is that of Pyrrolidone-carboxylate peptidase from Bacillus mycoides (strain KBAB4) (Bacillus weihenstephanensis).